The primary structure comprises 347 residues: MDNVIGLEIIEVVEQAAIASARWMGKGDKNMADQAAVDAMRNRMNQIHMRGRIVIGEGERDEAPMLYIGEEVGICTRPDAAQYCNPEELIEIDIAVDPCEGTNLCAYGQPGSMAVLAISEKGGLFAAPDFYMKKLAAPPAAKGKVDIRNSATENLKILSECLDRAIDELVVVVMKRDRHNDLIQEIRDAGARVQLISDGDVSAALACAFSGTNIHALMGIGAAPEGVISAAAMRALGGHFQGQLVYDPAVVMTKEWANRTREGNLEELKKAGITDPDKVYEAEELASGETVLFAACGITPGMLMKGVRFFKGGARTQSLVISTQSKTARFVDTIHMFDQQLKSLQLY.

Positions 33, 57, 97, and 100 each coordinate Mn(2+). Residues 100–102 (EGT), Tyr-131, 176–178 (RDR), and 198–200 (DGD) each bind substrate. Glu-225 provides a ligand contact to Mn(2+).

The protein belongs to the FBPase class 2 family. Homotetramer. Mn(2+) serves as cofactor.

The enzyme catalyses beta-D-fructose 1,6-bisphosphate + H2O = beta-D-fructose 6-phosphate + phosphate. The catalysed reaction is D-sedoheptulose 1,7-bisphosphate + H2O = D-sedoheptulose 7-phosphate + phosphate. Its pathway is carbohydrate biosynthesis; Calvin cycle. Its function is as follows. Catalyzes the hydrolysis of fructose 1,6-bisphosphate (Fru 1,6-P2) and sedoheptulose 1,7-bisphosphate (Sed 1,7-P2) to fructose 6-phosphate and sedoheptulose 7-phosphate, respectively. The polypeptide is D-fructose 1,6-bisphosphatase class 2/sedoheptulose 1,7-bisphosphatase (Thermosynechococcus vestitus (strain NIES-2133 / IAM M-273 / BP-1)).